The chain runs to 383 residues: Nuclear hormone receptor family member nhr-217 (383 aa).

A DNA-binding region (nuclear receptor) is located at residues 53–127 (IPACPVCDVP…AGLQRDYVRQ (75 aa)). 2 consecutive NR C4-type zinc fingers follow at residues 56 to 77 (CPVCDVPCRIEPHFGGIACAAC) and 93 to 109 (CKREKLCRKARKSCRAC). The region spanning 172–383 (ILKVSNSSLF…KLYVQIGIPF (212 aa)) is the NR LBD domain.

This sequence belongs to the nuclear hormone receptor family.

It is found in the nucleus. Orphan nuclear receptor. The chain is Nuclear hormone receptor family member nhr-217 (nhr-217) from Caenorhabditis elegans.